The sequence spans 495 residues: Cytochrome P450 monooxygenase 113 (495 aa).

The helical transmembrane segment at 2 to 22 (FLQIAACFTVIGLLYGLVSNL) threads the bilayer. Cys-428 lines the heme pocket.

This sequence belongs to the cytochrome P450 family. Heme serves as cofactor.

It is found in the membrane. It participates in secondary metabolite biosynthesis. Functionally, cytochrome P450 monooxygenase that is able to use 4-ethoxybenzoic acid as a substrate for oxidation. This is Cytochrome P450 monooxygenase 113 from Postia placenta (strain ATCC 44394 / Madison 698-R) (Brown rot fungus).